Reading from the N-terminus, the 744-residue chain is 1,4-alpha-glucan branching enzyme GlgB (744 aa).

The Nucleophile role is filled by Asp-415. The active-site Proton donor is the Glu-468.

It belongs to the glycosyl hydrolase 13 family. GlgB subfamily. In terms of assembly, monomer.

It catalyses the reaction Transfers a segment of a (1-&gt;4)-alpha-D-glucan chain to a primary hydroxy group in a similar glucan chain.. It participates in glycan biosynthesis; glycogen biosynthesis. Functionally, catalyzes the formation of the alpha-1,6-glucosidic linkages in glycogen by scission of a 1,4-alpha-linked oligosaccharide from growing alpha-1,4-glucan chains and the subsequent attachment of the oligosaccharide to the alpha-1,6 position. The protein is 1,4-alpha-glucan branching enzyme GlgB of Shewanella frigidimarina (strain NCIMB 400).